Consider the following 126-residue polypeptide: Large ribosomal subunit protein bL12 (126 aa).

Belongs to the bacterial ribosomal protein bL12 family. In terms of assembly, homodimer. Part of the ribosomal stalk of the 50S ribosomal subunit. Forms a multimeric L10(L12)X complex, where L10 forms an elongated spine to which 2 to 4 L12 dimers bind in a sequential fashion. Binds GTP-bound translation factors.

In terms of biological role, forms part of the ribosomal stalk which helps the ribosome interact with GTP-bound translation factors. Is thus essential for accurate translation. In Acidobacterium capsulatum (strain ATCC 51196 / DSM 11244 / BCRC 80197 / JCM 7670 / NBRC 15755 / NCIMB 13165 / 161), this protein is Large ribosomal subunit protein bL12.